A 101-amino-acid polypeptide reads, in one-letter code: Small ribosomal subunit protein uS14A (101 aa).

The segment at 32–71 (RRPGTPEPERNRAVEELRRQPRDASATRVRNRDSVDGRPR) is disordered. Basic and acidic residues-rich tracts occupy residues 38 to 53 (EPER…RQPR) and 61 to 70 (RNRDSVDGRP).

Belongs to the universal ribosomal protein uS14 family. In terms of assembly, part of the 30S ribosomal subunit. Contacts proteins S3 and S10.

Its function is as follows. Binds 16S rRNA, required for the assembly of 30S particles and may also be responsible for determining the conformation of the 16S rRNA at the A site. The protein is Small ribosomal subunit protein uS14A of Streptomyces griseus subsp. griseus (strain JCM 4626 / CBS 651.72 / NBRC 13350 / KCC S-0626 / ISP 5235).